The primary structure comprises 134 residues: Crustacean hyperglycemic hormones isoform B (134 aa).

The signal sequence occupies residues 1-24 (MFACRTLCLVVVMVASLGTSGVGG). Q61 is subject to Pyrrolidone carboxylic acid. F63 carries the D-phenylalanine; in form CHH-B-II modification. Disulfide bonds link C67/C103, C83/C99, and C86/C112. Valine amide is present on V132.

The protein belongs to the arthropod CHH/MIH/GIH/VIH hormone family. In terms of processing, stereoinversion of L-Phe (form CHH-B-I) to D-Phe (form CHH-B-II). As to expression, produced by the medulla terminalis X-organ in the eyestalks and transported to the sinus gland where they are stored and released. Present also in the ventral nervous system.

It localises to the secreted. Functionally, hormone found in the sinus gland of isopods and decapods which controls the blood sugar level. Has a secretagogue action over the amylase released from the midgut gland. May act as a stress hormone and may be involved in the control of molting and reproduction. This Homarus americanus (American lobster) protein is Crustacean hyperglycemic hormones isoform B.